We begin with the raw amino-acid sequence, 315 residues long: Probable NAD(P)H-dependent D-xylose reductase xyl1 (315 aa).

Tyr50 functions as the Proton donor in the catalytic mechanism. Residue His112 coordinates substrate. Residues Ser166–Asn167, Ser215–Glu224, and Lys271–Asn281 contribute to the NAD(+) site.

The protein belongs to the aldo/keto reductase family.

The enzyme catalyses xylitol + NAD(+) = D-xylose + NADH + H(+). The catalysed reaction is xylitol + NADP(+) = D-xylose + NADPH + H(+). It functions in the pathway carbohydrate metabolism; D-xylose degradation. Functionally, catalyzes the initial reaction in the xylose utilization pathway by reducing D-xylose into xylitol. Xylose is a major component of hemicelluloses such as xylan. Most fungi utilize D-xylose via three enzymatic reactions, xylose reductase (XR), xylitol dehydrogenase (XDH), and xylulokinase, to form xylulose 5-phosphate, which enters pentose phosphate pathway. The sequence is that of Probable NAD(P)H-dependent D-xylose reductase xyl1 (xyl1) from Aspergillus fumigatus (strain ATCC MYA-4609 / CBS 101355 / FGSC A1100 / Af293) (Neosartorya fumigata).